A 417-amino-acid polypeptide reads, in one-letter code: Carboxypeptidase B (417 aa).

Residues 1-15 (MLALLVLVTVALASA) form the signal peptide. A propeptide spans 16–110 (HHGGEHFEGE…VEAQFDSRVR (95 aa)) (activation peptide). Residues 118-412 (KYNKWETIEA…LAIKYVASYV (295 aa)) form the Peptidase M14 domain. A disulfide bond links cysteine 173 and cysteine 186. Residues histidine 176 and glutamate 179 each contribute to the Zn(2+) site. Substrate contacts are provided by residues 176–179 (HARE), arginine 234, and 251–252 (NR). Cystine bridges form between cysteine 245–cysteine 268 and cysteine 259–cysteine 273. Histidine 304 is a Zn(2+) binding site. Substrate contacts are provided by residues 305–306 (SY) and tyrosine 356. The active-site Proton donor/acceptor is the glutamate 378.

This sequence belongs to the peptidase M14 family. Requires Zn(2+) as cofactor. Pancreas.

Its subcellular location is the secreted. It localises to the zymogen granule lumen. It catalyses the reaction Preferential release of a C-terminal lysine or arginine amino acid.. The sequence is that of Carboxypeptidase B (CPB1) from Homo sapiens (Human).